The primary structure comprises 332 residues: Peroxidase C1C (332 aa).

The N-terminal stretch at 1-9 (MLHASFSNA) is a signal peptide. Glutamine 10 carries the pyrrolidone carboxylic acid modification. Disulfide bonds link cysteine 20/cysteine 100, cysteine 53/cysteine 58, cysteine 106/cysteine 310, and cysteine 186/cysteine 218. Asparagine 22 is a glycosylation site (N-linked (GlcNAc...) asparagine). The Proton acceptor role is filled by histidine 51. Ca(2+)-binding residues include aspartate 52, valine 55, glycine 57, aspartate 59, and serine 61. The N-linked (GlcNAc...) asparagine glycan is linked to asparagine 66. Substrate is bound at residue proline 148. Heme b is bound at residue histidine 179. Threonine 180 provides a ligand contact to Ca(2+). N-linked (GlcNAc...) asparagine glycans are attached at residues asparagine 195, asparagine 207, and asparagine 223. The Ca(2+) site is built by aspartate 231, threonine 234, and aspartate 239. N-linked (GlcNAc...) asparagine glycosylation is present at asparagine 264.

This sequence belongs to the peroxidase family. Classical plant (class III) peroxidase subfamily. Ca(2+) serves as cofactor. The cofactor is heme b.

The protein resides in the secreted. Its subcellular location is the vacuole. It carries out the reaction 2 a phenolic donor + H2O2 = 2 a phenolic radical donor + 2 H2O. Removal of H(2)O(2), oxidation of toxic reductants, biosynthesis and degradation of lignin, suberization, auxin catabolism, response to environmental stresses such as wounding, pathogen attack and oxidative stress. These functions might be dependent on each isozyme/isoform in each plant tissue. The protein is Peroxidase C1C (PRXC1C) of Armoracia rusticana (Horseradish).